Here is a 158-residue protein sequence, read N- to C-terminus: Peptide deformylase (158 aa).

Positions 88 and 130 each coordinate Fe cation. E131 is a catalytic residue. H134 is a Fe cation binding site.

Belongs to the polypeptide deformylase family. Requires Fe(2+) as cofactor.

The catalysed reaction is N-terminal N-formyl-L-methionyl-[peptide] + H2O = N-terminal L-methionyl-[peptide] + formate. Removes the formyl group from the N-terminal Met of newly synthesized proteins. Requires at least a dipeptide for an efficient rate of reaction. N-terminal L-methionine is a prerequisite for activity but the enzyme has broad specificity at other positions. This Agathobacter rectalis (strain ATCC 33656 / DSM 3377 / JCM 17463 / KCTC 5835 / VPI 0990) (Eubacterium rectale) protein is Peptide deformylase.